The following is a 366-amino-acid chain: Hydroxyproline O-arabinosyltransferase 1 (366 aa).

The helical; Signal-anchor transmembrane segment at 6–26 threads the bilayer; the sequence is TLFYPLLITLSVALITYNIII.

Ubiquitous.

It is found in the golgi apparatus. The protein resides in the cis-Golgi network membrane. It carries out the reaction trans-4-hydroxy-L-prolyl-[protein] + UDP-beta-L-arabinofuranose = O-(beta-L-arabinofuranosyl)-trans-4-hydroxy-L-prolyl-[protein] + UDP + H(+). Its function is as follows. Glycosyltransferase involved in the O-arabinosylation of several proteins including extensins and small signaling peptides. Catalyzes the transfer of the initial L-arabinose to the hydroxyl group of Hyp residues. Contributes redundantly with HPAT2 and HPAT3 to arabinosylation of EXT3. This chain is Hydroxyproline O-arabinosyltransferase 1, found in Arabidopsis thaliana (Mouse-ear cress).